A 339-amino-acid chain; its full sequence is Phosphate acyltransferase (339 aa).

It belongs to the PlsX family. As to quaternary structure, homodimer. Probably interacts with PlsY.

It is found in the cytoplasm. It carries out the reaction a fatty acyl-[ACP] + phosphate = an acyl phosphate + holo-[ACP]. Its pathway is lipid metabolism; phospholipid metabolism. In terms of biological role, catalyzes the reversible formation of acyl-phosphate (acyl-PO(4)) from acyl-[acyl-carrier-protein] (acyl-ACP). This enzyme utilizes acyl-ACP as fatty acyl donor, but not acyl-CoA. This chain is Phosphate acyltransferase, found in Vesicomyosocius okutanii subsp. Calyptogena okutanii (strain HA).